A 434-amino-acid polypeptide reads, in one-letter code: Glycylpeptide N-tetradecanoyltransferase 1 (434 aa).

Residues 1–24 (MADNNSPPGSVEQKADQIVEANPL) are disordered. At Ala2 the chain carries N-acetylalanine. Tetradecanoyl-CoA is bound by residues 48–51 (HKFW), 184–186 (LCV), and 192–196 (SKRLA). Leu434 acts as the Proton acceptor; via carboxylate in catalysis.

Belongs to the NMT family. As to expression, expressed ubiquitously, with higher levels in young tissues (at protein level).

The protein resides in the cytoplasm. The enzyme catalyses N-terminal glycyl-[protein] + tetradecanoyl-CoA = N-tetradecanoylglycyl-[protein] + CoA + H(+). Its function is as follows. Adds a myristoyl group to the N-terminal glycine residue of certain cellular proteins. Can also use decanoyl-CoA and lauroyl-CoA as substrates. The sequence is that of Glycylpeptide N-tetradecanoyltransferase 1 (NMT1) from Arabidopsis thaliana (Mouse-ear cress).